We begin with the raw amino-acid sequence, 264 residues long: Acyl-[acyl-carrier-protein]--UDP-N-acetylglucosamine O-acyltransferase (264 aa).

The protein belongs to the transferase hexapeptide repeat family. LpxA subfamily. Homotrimer.

Its subcellular location is the cytoplasm. The catalysed reaction is a (3R)-hydroxyacyl-[ACP] + UDP-N-acetyl-alpha-D-glucosamine = a UDP-3-O-[(3R)-3-hydroxyacyl]-N-acetyl-alpha-D-glucosamine + holo-[ACP]. Its pathway is glycolipid biosynthesis; lipid IV(A) biosynthesis; lipid IV(A) from (3R)-3-hydroxytetradecanoyl-[acyl-carrier-protein] and UDP-N-acetyl-alpha-D-glucosamine: step 1/6. Involved in the biosynthesis of lipid A, a phosphorylated glycolipid that anchors the lipopolysaccharide to the outer membrane of the cell. The chain is Acyl-[acyl-carrier-protein]--UDP-N-acetylglucosamine O-acyltransferase from Glaesserella parasuis serovar 5 (strain SH0165) (Haemophilus parasuis).